The primary structure comprises 158 residues: Transcriptional repressor NrdR (158 aa).

Residues 3-34 (CPSCQNTDSRVLESRAADAGRSVRRRRECLHC) fold into a zinc finger. Residues 49–139 (ITVLKRNGNR…VYRDFRGVND (91 aa)) form the ATP-cone domain.

Belongs to the NrdR family. Requires Zn(2+) as cofactor.

Negatively regulates transcription of bacterial ribonucleotide reductase nrd genes and operons by binding to NrdR-boxes. The sequence is that of Transcriptional repressor NrdR from Prochlorococcus marinus (strain MIT 9313).